A 297-amino-acid chain; its full sequence is Vacuolar protein sorting-associated protein 26C (297 aa).

The protein belongs to the VPS26 family. In terms of assembly, component of the commander complex that is essential for endosomal recycling of transmembrane cargos; the commander complex is composed of the CCC subcomplex and the retriever subcomplex. Component of the heterotrimeric retriever complex consisting of VPS26C, VPS29 and VPS35L; within the complex interacts with VPS35L. Interacts with SNX17 (via C-terminus); the interaction is direct and associates SNX17 with the retriever complex. Interacts with SNX31; the interaction is direct. Ubiquitously expressed.

Its subcellular location is the endosome. Its function is as follows. Component of the commander complex that is essential for endosomal recycling of transmembrane cargos; the commander complex is composed of the CCC subcomplex and the retriever subcomplex. Component of the retriever complex, which is a heterotrimeric complex related to retromer cargo-selective complex (CSC) and essential for retromer-independent retrieval and recycling of numerous cargos such as integrin alpha-5/beta-1 (ITGA5:ITGB1). The recruitment of the retriever complex to the endosomal membrane involves CCC and WASH complexes. In the endosomes, drives the retriever and recycling of NxxY-motif-containing cargo proteins by coupling to SNX17, a cargo essential for the homeostatic maintenance of numerous cell surface proteins associated with processes that include cell migration, cell adhesion, nutrient supply and cell signaling. Functionally, (Microbial infection) The heterotrimeric retriever complex, in collaboration with the CCC complex, mediates the exit of human papillomavirus to the cell surface. The polypeptide is Vacuolar protein sorting-associated protein 26C (Homo sapiens (Human)).